Reading from the N-terminus, the 143-residue chain is Type II secretion system core protein G (143 aa).

A propeptide spans 1 to 17 (MIKRSITRSPSRAGQAG) (leader sequence). M18 is modified (N-methylmethionine). The chain crosses the membrane as a helical span at residues 18–38 (MSLLEIIIVIVLIGAVLTLVG).

The protein belongs to the GSP G family. Type II secretion system is composed of four main components: the outer membrane complex, the inner membrane complex, the cytoplasmic secretion ATPase and the periplasm-spanning pseudopilus. Forms homomultimers. Interacts with pseudopilin tip complex component XpsJ as well as XpsI and XcpH. Interacts with XpsN and secretin XpsD. In terms of processing, cleaved by the prepilin peptidase. Post-translationally, methylated by prepilin peptidase at the amino group of the N-terminal methionine once the leader sequence is cleaved.

It localises to the cell inner membrane. Functionally, core component of the type II secretion system required for the energy-dependent secretion of extracellular factors such as proteases and toxins from the periplasm. Pseudopilin (pilin-like) protein that polymerizes to form the pseudopilus. Further polymerization triggers pseudopilus growth. The polypeptide is Type II secretion system core protein G (xpsG) (Xanthomonas campestris pv. campestris (strain ATCC 33913 / DSM 3586 / NCPPB 528 / LMG 568 / P 25)).